A 400-amino-acid chain; its full sequence is Dual-specificity RNA methyltransferase RlmN (400 aa).

The active-site Proton acceptor is the E125. In terms of domain architecture, Radical SAM core spans 131-372; it reads ETDRGTLCVS…VRTPRGRDIL (242 aa). A disulfide bond links C138 and C375. [4Fe-4S] cluster contacts are provided by C145, C149, and C152. Residues 201-202, S233, 255-257, and N332 each bind S-adenosyl-L-methionine; these read GE and SLH. Catalysis depends on C375, which acts as the S-methylcysteine intermediate.

The protein belongs to the radical SAM superfamily. RlmN family. The cofactor is [4Fe-4S] cluster.

Its subcellular location is the cytoplasm. It carries out the reaction adenosine(2503) in 23S rRNA + 2 reduced [2Fe-2S]-[ferredoxin] + 2 S-adenosyl-L-methionine = 2-methyladenosine(2503) in 23S rRNA + 5'-deoxyadenosine + L-methionine + 2 oxidized [2Fe-2S]-[ferredoxin] + S-adenosyl-L-homocysteine. It catalyses the reaction adenosine(37) in tRNA + 2 reduced [2Fe-2S]-[ferredoxin] + 2 S-adenosyl-L-methionine = 2-methyladenosine(37) in tRNA + 5'-deoxyadenosine + L-methionine + 2 oxidized [2Fe-2S]-[ferredoxin] + S-adenosyl-L-homocysteine. In terms of biological role, specifically methylates position 2 of adenine 2503 in 23S rRNA and position 2 of adenine 37 in tRNAs. m2A2503 modification seems to play a crucial role in the proofreading step occurring at the peptidyl transferase center and thus would serve to optimize ribosomal fidelity. This Bradyrhizobium diazoefficiens (strain JCM 10833 / BCRC 13528 / IAM 13628 / NBRC 14792 / USDA 110) protein is Dual-specificity RNA methyltransferase RlmN.